Consider the following 544-residue polypeptide: Chaperonin GroEL (544 aa).

ATP contacts are provided by residues 29 to 32 (TLGP), Lys-50, 86 to 90 (DGTTT), Gly-413, 479 to 481 (DAA), and Asp-495.

The protein belongs to the chaperonin (HSP60) family. As to quaternary structure, forms a cylinder of 14 subunits composed of two heptameric rings stacked back-to-back. Interacts with the co-chaperonin GroES.

Its subcellular location is the cytoplasm. It carries out the reaction ATP + H2O + a folded polypeptide = ADP + phosphate + an unfolded polypeptide.. Functionally, together with its co-chaperonin GroES, plays an essential role in assisting protein folding. The GroEL-GroES system forms a nano-cage that allows encapsulation of the non-native substrate proteins and provides a physical environment optimized to promote and accelerate protein folding. The protein is Chaperonin GroEL of Borrelia turicatae (strain 91E135).